A 542-amino-acid polypeptide reads, in one-letter code: Chaperonin GroEL 1 (542 aa).

ATP is bound by residues 29–32, 86–90, glycine 413, 477–479, and aspartate 493; these read TLGP, DGTTT, and NAA.

This sequence belongs to the chaperonin (HSP60) family. In terms of assembly, forms a cylinder of 14 subunits composed of two heptameric rings stacked back-to-back. Interacts with the co-chaperonin GroES.

It is found in the cytoplasm. It catalyses the reaction ATP + H2O + a folded polypeptide = ADP + phosphate + an unfolded polypeptide.. Its function is as follows. Together with its co-chaperonin GroES, plays an essential role in assisting protein folding. The GroEL-GroES system forms a nano-cage that allows encapsulation of the non-native substrate proteins and provides a physical environment optimized to promote and accelerate protein folding. This is Chaperonin GroEL 1 from Kineococcus radiotolerans (strain ATCC BAA-149 / DSM 14245 / SRS30216).